The sequence spans 391 residues: Steroid 3-ketoacyl-CoA thiolase (391 aa).

Residue Cys-93 is the Acyl-thioester intermediate of the active site. CoA is bound by residues Gln-151, Arg-221 to Thr-223, and Ser-246. Catalysis depends on proton acceptor residues His-347 and Cys-377. Gly-379 provides a ligand contact to substrate.

The protein belongs to the thiolase-like superfamily. Thiolase family. In terms of assembly, dimer of dimers.

The catalysed reaction is an acyl-CoA + acetyl-CoA = a 3-oxoacyl-CoA + CoA. The enzyme catalyses 3-oxochol-4-en-22-oyl-CoA + acetyl-CoA = 3,22-dioxochol-4-en-24-oyl-CoA + CoA. Its pathway is steroid metabolism; cholesterol degradation. Functionally, involved in the beta-oxidation of the cholesterol side chain. It is important for utilization of cholesterol as a sole carbon source in vitro and for full virulence in the chronic stage of mouse lung infection. Catalyzes the thiolysis of 3,22-dioxochol-4-en-24-oyl-CoA to yield 3-oxo-4-pregnene-20-carboxyl-CoA (3-OPC-CoA) and acetyl-CoA. Also able to use acetoacetyl-CoA (AcAcCoA) as substrate. The chain is Steroid 3-ketoacyl-CoA thiolase (fadA5) from Mycobacterium tuberculosis (strain ATCC 25618 / H37Rv).